We begin with the raw amino-acid sequence, 92 residues long: RTCPYAQRARLIIAAKGISADLVNVDLNKKPDHFFDLNPYGEVPVVLHNGGHVYESLIAAEYLEEAFPDPPLFAKEALVRANERIYFNHATK.

In terms of domain architecture, GST N-terminal spans 1–71 (RTCPYAQRAR…YLEEAFPDPP (71 aa)). Catalysis depends on Cys3, which acts as the Nucleophile. Glutathione-binding positions include Lys30, Val43, and 55–56 (ES).

The protein belongs to the GST superfamily. Omega family.

The enzyme catalyses RX + glutathione = an S-substituted glutathione + a halide anion + H(+). It catalyses the reaction L-dehydroascorbate + 2 glutathione = glutathione disulfide + L-ascorbate. It carries out the reaction methylarsonate + 2 glutathione + H(+) = methylarsonous acid + glutathione disulfide + H2O. Its function is as follows. Exhibits glutathione-dependent thiol transferase activity. Has dehydroascorbate reductase activity and may contribute to the recycling of ascorbic acid. Participates in the biotransformation of inorganic arsenic and reduces monomethylarsonic acid (MMA). In Aplysia californica (California sea hare), this protein is Probable glutathione transferase.